The primary structure comprises 499 residues: Maturase K (499 aa).

The protein belongs to the intron maturase 2 family. MatK subfamily.

Its subcellular location is the plastid. It is found in the chloroplast. Its function is as follows. Usually encoded in the trnK tRNA gene intron. Probably assists in splicing its own and other chloroplast group II introns. The sequence is that of Maturase K from Neltuma juliflora (Mesquite).